We begin with the raw amino-acid sequence, 154 residues long: Prefoldin subunit 2 (154 aa).

Disordered regions lie at residues 1 to 20 and 126 to 154; these read MADSSGRVGKSGGSGTGKGA and LMGEDEKPAAKENSEGAGAKSSSAGVLVS. Gly residues predominate over residues 9–18; that stretch reads GKSGGSGTGK. The segment covering 126-139 has biased composition (basic and acidic residues); it reads LMGEDEKPAAKENS. A compositionally biased stretch (low complexity) spans 141 to 154; the sequence is GAGAKSSSAGVLVS.

The protein belongs to the prefoldin subunit beta family. Heterohexamer of two PFD-alpha type and four PFD-beta type subunits. Component of the PAQosome complex which is responsible for the biogenesis of several protein complexes and which consists of R2TP complex members RUVBL1, RUVBL2, RPAP3 and PIH1D1, URI complex members PFDN2, PFDN6, PDRG1, UXT and URI1 as well as ASDURF, POLR2E and DNAAF10/WDR92. Interacts with URI1; the interaction is phosphorylation-dependent and occurs in a growth-dependent manner.

It localises to the nucleus. Its subcellular location is the cytoplasm. It is found in the mitochondrion. Functionally, binds specifically to cytosolic chaperonin (c-CPN) and transfers target proteins to it. Binds to nascent polypeptide chain and promotes folding in an environment in which there are many competing pathways for nonnative proteins. The sequence is that of Prefoldin subunit 2 (Pfdn2) from Rattus norvegicus (Rat).